The following is a 342-amino-acid chain: Dihydroorotate dehydrogenase (quinone) (342 aa).

FMN is bound by residues 65-69 (AGLDK) and T89. K69 serves as a coordination point for substrate. 114 to 118 (NRMGF) contributes to the substrate binding site. The FMN site is built by N142 and N175. N175 lines the substrate pocket. S178 acts as the Nucleophile in catalysis. N180 provides a ligand contact to substrate. FMN is bound by residues K220 and T248. Residue 249-250 (NT) participates in substrate binding. FMN is bound by residues G271, G300, and 321-322 (YT).

The protein belongs to the dihydroorotate dehydrogenase family. Type 2 subfamily. Monomer. The cofactor is FMN.

Its subcellular location is the cell membrane. It catalyses the reaction (S)-dihydroorotate + a quinone = orotate + a quinol. Its pathway is pyrimidine metabolism; UMP biosynthesis via de novo pathway; orotate from (S)-dihydroorotate (quinone route): step 1/1. Catalyzes the conversion of dihydroorotate to orotate with quinone as electron acceptor. The chain is Dihydroorotate dehydrogenase (quinone) from Burkholderia pseudomallei (strain 668).